Here is a 289-residue protein sequence, read N- to C-terminus: Diaminopimelate epimerase (289 aa).

Residues asparagine 13, glutamine 52, and asparagine 72 each contribute to the substrate site. Cysteine 81 serves as the catalytic Proton donor. Substrate-binding positions include 82–83 (GN), asparagine 167, asparagine 201, and 219–220 (ER). Residue cysteine 228 is the Proton acceptor of the active site. 229–230 (GT) contributes to the substrate binding site.

The protein belongs to the diaminopimelate epimerase family. As to quaternary structure, homodimer.

Its subcellular location is the cytoplasm. It catalyses the reaction (2S,6S)-2,6-diaminopimelate = meso-2,6-diaminopimelate. The protein operates within amino-acid biosynthesis; L-lysine biosynthesis via DAP pathway; DL-2,6-diaminopimelate from LL-2,6-diaminopimelate: step 1/1. Functionally, catalyzes the stereoinversion of LL-2,6-diaminopimelate (L,L-DAP) to meso-diaminopimelate (meso-DAP), a precursor of L-lysine and an essential component of the bacterial peptidoglycan. The polypeptide is Diaminopimelate epimerase (Caulobacter sp. (strain K31)).